The chain runs to 409 residues: Single Ig IL-1-related receptor (409 aa).

Residues 1–117 (MAGVCDMAPN…TLWRAGPAGH (117 aa)) lie on the Extracellular side of the membrane. The Ig-like C2-type domain maps to 9 to 108 (PNFLSPSEDQ…VWNVSSHSFT (100 aa)). Asn31, Asn58, Asn73, Asn85, and Asn101 each carry an N-linked (GlcNAc...) asparagine glycan. Cys32 and Cys97 are oxidised to a cystine. The chain crosses the membrane as a helical; Signal-anchor for type III membrane protein span at residues 118 to 138 (VAAVLASLLVLVVLLLVALLY). Residues 139–409 (VKCRLNMLLW…FYCLVSEDDV (271 aa)) are Cytoplasmic-facing. The region spanning 162 to 306 (KLYDAYVSYS…DFWKELQLAL (145 aa)) is the TIR domain. The residue at position 382 (Ser382) is a Phosphoserine.

It belongs to the interleukin-1 receptor family. Interacts with IL1R1, IRAK1, TLR4, TLR5, TLR9 and TRAF6. Upon IL-1 stimulation found in a complex at least composed of IL1R1, SIGIRR, MYD88, IRAK1 and TRAF6. Upon stimulation with LPC found in a complex at least composed of TLR4, SIG1IR, MYD88, IRAK1 and TRAF6. Interacts with PALM3. As to expression, expressed at high levels in kidney, and at moderate levels in colon, small intestine, lung, spleen and liver. Not expressed in brain and muscle. Expressed at high levels in epithelial cells, at moderate levels in splenocytes, and at low or undetectable levels in fibroblasts or endothelial cells. Expressed in mucosal and dendritic cells.

The protein localises to the membrane. Acts as a negative regulator of the Toll-like and IL-1R receptor signaling pathways. Attenuates the recruitment of receptor-proximal signaling components to the TLR4 receptor, probably through an TIR-TIR domain interaction with TLR4. Through its extracellular domain interferes with the heterodimerization of Il1R1 and IL1RAP. The polypeptide is Single Ig IL-1-related receptor (Sigirr) (Mus musculus (Mouse)).